The following is a 316-amino-acid chain: MVDRLVNSEANTRRIASVENCFGSSGVPLAMQGRVLVGEGVLTKMCRKRPKSRQFFLFNDILVYGNIVIGKKKYNKQHIMPLEEVSLESIADNQTYRNGWYIRTTTKSFVVFAATSTEKQEWMAHINKCVEDLLRKSGKKPVENHAAVWVPDTDASVCMHCKKTQFTFIQRRHHCRNCGAVVCAGCSAKKFLLPQQSTKALRVCDACYERLKHVPSSLGSGEDSAAATGAASGNKLNTTAGDSSNDEDSDEETASPGGESHDEPRFYGDNSVLSAVEDSSTITSPSSATTGSLEAPQVTPSVQSSPAAVATTGSHC.

One can recognise a PH domain in the interval 35-131; that stretch reads VLVGEGVLTK…WMAHINKCVE (97 aa). The FYVE-type zinc finger occupies 152-212; sequence DTDASVCMHC…VCDACYERLK (61 aa). Zn(2+) contacts are provided by Cys158, Cys161, Cys175, Cys178, Cys183, Cys186, Cys204, and Cys207. Positions 215–316 are disordered; sequence PSSLGSGEDS…AAVATTGSHC (102 aa). Acidic residues predominate over residues 244–253; it reads SNDEDSDEET. The span at 279 to 292 shows a compositional bias: low complexity; it reads SSTITSPSSATTGS. The segment covering 298–316 has biased composition (polar residues); the sequence is VTPSVQSSPAAVATTGSHC.

As to quaternary structure, interacts with Gdi (Rab GDP dissociation inhibitor). In terms of tissue distribution, in ovaries, expressed both in the germ line cells and in the overlying somatic follicular epithelium.

It localises to the apical cell membrane. Its subcellular location is the endosome membrane. It is found in the cytoplasm. The protein resides in the cell cortex. Functions in the regulation of endosome morphology and late endosome formation. Has a role in controlling trafficking from early to late endosomes and from late endosomes to lysosomes. Important for localization of Gdi to the endosomal membranes. May function in controlling the activity of multiple regulators in the endocytic pathway, perhaps by positively controlling those involved in the early steps of endocytosis such as Rab5 and hrs, and negative regulating those involved in the late stages of endocytosis like car and VhaSFD. The protein is Pleckstrin homology domain-containing family F member 1 homolog of Drosophila melanogaster (Fruit fly).